A 520-amino-acid chain; its full sequence is L-cysteine:1D-myo-inositol 2-amino-2-deoxy-alpha-D-glucopyranoside ligase (520 aa).

Cysteine 48 provides a ligand contact to Zn(2+). Residues 48 to 51 (CGIT), threonine 63, and 86 to 88 (NVT) contribute to the L-cysteinyl-5'-AMP site. Positions 50–60 (ITPYDSTHLGH) match the 'HIGH' region motif. The 'ERGGDP' region motif lies at 192–197 (ERGGDP). Tryptophan 232 is a binding site for L-cysteinyl-5'-AMP. Cysteine 236 is a binding site for Zn(2+). An L-cysteinyl-5'-AMP-binding site is contributed by 254 to 256 (GED). Histidine 261 serves as a coordination point for Zn(2+). Isoleucine 288 is an L-cysteinyl-5'-AMP binding site. The 'KMSKS' region signature appears at 294-298 (KMSKS).

The protein belongs to the class-I aminoacyl-tRNA synthetase family. MshC subfamily. As to quaternary structure, monomer. The cofactor is Zn(2+).

It carries out the reaction 1D-myo-inositol 2-amino-2-deoxy-alpha-D-glucopyranoside + L-cysteine + ATP = 1D-myo-inositol 2-(L-cysteinylamino)-2-deoxy-alpha-D-glucopyranoside + AMP + diphosphate + H(+). In terms of biological role, catalyzes the ATP-dependent condensation of GlcN-Ins and L-cysteine to form L-Cys-GlcN-Ins. The protein is L-cysteine:1D-myo-inositol 2-amino-2-deoxy-alpha-D-glucopyranoside ligase of Corynebacterium kroppenstedtii (strain DSM 44385 / JCM 11950 / CIP 105744 / CCUG 35717).